A 1218-amino-acid polypeptide reads, in one-letter code: MEESQSKQESNTRVAQHGSQQDVDPTFQTKRALEKERSKPRPRPLPRVQLQSLPGWSSTSKDVPLSQLIREMDHESRRCIHRSKKKLDRSEHISQGTIPEIYEKRKETISHTQSMEQKYLFQNFTKLLLLQKCCPGGSEKLVRESWHPCVPEEGGHMIEIQDLFDPNLDTEKKPQLVIIEGAAGIGKSTLARQVKRAWDEGQLYRDRFQHVFFFSCRELAQCKQLSLAELIAQGQEVPTAPTRQILSRPEKLLFILDGIDEPAWVLEDQNPELCVHWSQAQPVHTLLGSLLGKSILPEASLMLTARTTALQKLVPSLGQPHRVEVLGFSEFERKDYFYKYFAKERNTIIDFNLIGSIPVLLTLCEVPWVCWLLCTCLEKQMQQGEVLSLTSQTTTALCLKYLSLTIPGQHLSTQLRTLCSLAAEGICQRRTLFSKSDLCKQGLAEDAIATFLKIGVLQRQPSSLSYSFAHLCLQEFFAAMSYILEDSEEAHGDMGNDRTVETLVERYGRQNLFEAPTVRFLLGLLNTREMREMENIFACKFPWETKLKLLQSIIGEPFCQPCHLGLFHCLYENQEEELLTETMLCFPLTASGPNHMEATVFQTNVKRLVIQTDMELMVVTFCITFSHVRSLRLKGKGQQEYKLTAPAMVLYRWTPISEASWKVLFSNLKCTRNLEELDLSGNPLSYSAVRSLCTALRQPGCRLKTLWLVDCGLTSRCCSFLASMLSAHSRLAELDLRLNDLGDNGVRQLCEGLRNPACNLSILRLDQASLSEQVITELRALETKNPKLFISSTWMSHMTMPTENTDGEESLTSSKQQQQQSGDKHMEPLGTDDDFWGPSGPVSTEVVDRERNLYRVRLPMAGSYHCPSTGLHFVVTRAVTIEIGFCAWSQFLHETPLQHSHMVAGPLFDIKAEHGAVTAVCLPHFVSLQEGKVDSSLFHVAHFQDHGMVLETPARVEPHFAVLENPSFSPMGVLLRMIPAVGHFIPITSITLIYYRLYLEDITFHLYLVPNDCTIRKAIDEEELKFQFVRINKPPPVDALYVGSRYIVSSSKEVEILPKELELCYRSPRESQLFSEIYVGNIGSGINLQLTDKKYMNLIWEALLKPGDLRPALPRMASAPKDAPALLHFVDQHREQLVARVTSVDPLLDKLHGLVLSEEDYETVRAEATNQDKMRKLFRGSRSWSWDCKDHFYQALKETHPHLIMDLLEKSGGVSVRL.

The disordered stretch occupies residues 1–61 (MEESQSKQES…SLPGWSSTSK (61 aa)). Polar residues predominate over residues 7-29 (KQESNTRVAQHGSQQDVDPTFQT). The 310-residue stretch at 175 to 484 (QLVIIEGAAG…EFFAAMSYIL (310 aa)) folds into the NACHT domain. Residue 181-188 (GAAGIGKS) participates in ATP binding. LRR repeat units lie at residues 343-364 (KERN…LTLC), 673-693 (NLEE…RSLC), and 730-750 (RLAE…RQLC). Residues 799–815 (TMPTENTDGEESLTSSK) show a composition bias toward polar residues. The tract at residues 799–842 (TMPTENTDGEESLTSSKQQQQQSGDKHMEPLGTDDDFWGPSGPV) is disordered. Residues 835–968 (FWGPSGPVST…HFAVLENPSF (134 aa)) are ZU5. The 284-residue stretch at 835 to 1118 (FWGPSGPVST…LRPALPRMAS (284 aa)) folds into the FIIND domain. The interval 969–1118 (SPMGVLLRMI…LRPALPRMAS (150 aa)) is UPA. Residues 1122–1211 (DAPALLHFVD…HLIMDLLEKS (90 aa)) form the CARD domain.

Belongs to the NLRP family. In terms of assembly, interacts (via LRR repeats) with BCL2 and BCL2L1 (via the loop between motifs BH4 and BH3). Interacts with NOD2; this interaction is enhanced in the presence of muramyl dipeptide (MDP) and increases IL1B release. Interacts with EIF2AK2/PKR; this interaction requires EIF2AK2 activity, is accompanied by EIF2AK2 autophosphorylation and promotes inflammasome assembly in response to danger-associated signals. Interacts with MEFV; this interaction targets Nlrp1a to degradation by autophagy, hence preventing excessive IL1B- and IL18-mediated inflammation. Interacts with DPP9; leading to inhibit activation of the inflammasome. DPP9 acts via formation of a ternary complex, composed of a DPP9 homodimer, one full-length NLRP1 protein, and one cleaved C-terminus of Nlrp1a (NACHT, LRR and PYD domains-containing protein 1a, C-terminus). Interacts with DPP8; leading to inhibit activation of the inflammasome, probably via formation of a ternary complex with DPP8. Interacts with the C-terminal part of Nlrp1a (NACHT, LRR and PYD domains-containing protein 1a, C-terminus) in absence of pathogens and other damage-associated signals. As to quaternary structure, interacts with the N-terminal part of Nlrp1a (NACHT, LRR and PYD domains-containing protein 1a, N-terminus) in absence of pathogens and other damage-associated signals. Homomultimer; forms the Nlrp1a inflammasome polymeric complex, a filament composed of homopolymers of this form in response to pathogens and other damage-associated signals. The Nlrp1a inflammasome polymeric complex directly recruits pro-caspase-1 (proCASP1) independently of PYCARD/ASC. Interacts (via CARD domain) with CASP1 (via CARD domain); leading to CASP1 activation. Post-translationally, autocatalytically cleaved. Autocatalytic cleavage in FIIND region occurs constitutively, prior to activation signals, and is required for inflammasome activity (IL1B release), possibly by facilitating CASP1 binding. Both N- and C-terminal parts remain associated non-covalently. In terms of processing, (Microbial infection) Cleavage by B.anthracis lethal toxin (LT) endopeptidase promotes ubiquitination and degradation of the N-terminal part, releasing the cleaved C-terminal part of the protein (NACHT, LRR and PYD domains-containing protein 1a, C-terminus), which polymerizes and forms the Nlrp1a inflammasome. Ubiquitinated in response to pathogen-associated signals, leading to its degradation by the proteasome and subsequent release of the cleaved C-terminal part of the protein (NACHT, LRR and PYD domains-containing protein 1a, C-terminus), which polymerizes and forms the Nlrp1a inflammasome.

It localises to the cytoplasm. It is found in the cytosol. The protein resides in the nucleus. The protein localises to the inflammasome. With respect to regulation, activated by cleavage by B.anthracis lethal toxin (LT) endopeptidase. Cleavage by LT promotes ubiquitination and degradation of the N-terminal part, releasing the cleaved C-terminal part of the protein (NACHT, LRR and PYD domains-containing protein 1a, C-terminus), which polymerizes and forms the Nlrp1a inflammasome. Nlrp1a inflammasome is inhibited by DPP8 and DPP9, which sequester the C-terminal fragment of Nlrp1a (NACHT, LRR and PYD domains-containing protein 1a, C-terminus) in a ternary complex, thereby preventing Nlrp1a oligomerization and activation. Nlrp1a inflammasome is weakly activated by Val-boroPro (Talabostat, PT-100), an inhibitor of dipeptidyl peptidases DPP8 and DPP9. Val-boroPro relieves inhibition of DPP8 and/or DPP9 by promoting disruption of the ternary complex, releasing its C-terminal part from autoinhibition. Weakly activated by Toxoplasma gondii. Its function is as follows. Acts as the sensor component of the Nlrp1a inflammasome, which mediates inflammasome activation in response to various pathogen-associated signals, leading to subsequent pyroptosis. Inflammasomes are supramolecular complexes that assemble in the cytosol in response to pathogens and other damage-associated signals and play critical roles in innate immunity and inflammation. Acts as a recognition receptor (PRR): recognizes specific pathogens and other damage-associated signals, such as B.anthracis lethal toxin (LT) or Val-boroPro inhibitor, and mediates the formation of the inflammasome polymeric complex. In response to pathogen-associated signals, the N-terminal part of Nlrp1a is degraded by the proteasome, releasing the cleaved C-terminal part of the protein (NACHT, LRR and PYD domains-containing protein 1a, C-terminus), which polymerizes to initiate the formation of the inflammasome complex: the inflammasome directly recruits pro-caspase-1 (proCASP1) independently of PYCARD/ASC and promotes caspase-1 (CASP1) activation, which subsequently cleaves and activates inflammatory cytokines IL1B and IL18 and gasdermin-D (GSDMD), leading to pyroptosis. In the absence of GSDMD expression, the Nlrp1a inflammasome is able to recruit and activate CASP8, leading to activation of gasdermin-E (GSDME). Functionally, constitutes the precursor of the Nlrp1a inflammasome, which mediates autoproteolytic processing within the FIIND domain to generate the N-terminal and C-terminal parts, which are associated non-covalently in absence of pathogens and other damage-associated signals. In terms of biological role, regulatory part that prevents formation of the Nlrp1a inflammasome: in absence of pathogens and other damage-associated signals, interacts with the C-terminal part of Nlrp1a (NACHT, LRR and PYD domains-containing protein 1a, C-terminus), preventing activation of the Nlrp1a inflammasome. In response to pathogen-associated signals, this part is ubiquitinated by the N-end rule pathway and degraded by the proteasome, releasing the cleaved C-terminal part of the protein, which polymerizes and forms the Nlrp1a inflammasome. Constitutes the active part of the Nlrp1a inflammasome. In absence of pathogens and other damage-associated signals, interacts with the N-terminal part of Nlrp1a (NACHT, LRR and PYD domains-containing protein 1a, N-terminus), preventing activation of the Nlrp1a inflammasome. In response to pathogen-associated signals, the N-terminal part of Nlrp1a is degraded by the proteasome, releasing this form, which polymerizes to form the Nlrp1a inflammasome complex: the Nlrp1a inflammasome complex then directly recruits pro-caspase-1 (proCASP1) and promotes caspase-1 (CASP1) activation, leading to gasdermin-D (GSDMD) cleavage and subsequent pyroptosis. The protein is NACHT, LRR and PYD domains-containing protein 1 allele 2 of Rattus norvegicus (Rat).